The chain runs to 262 residues: F-actin-capping protein subunit alpha (262 aa).

Belongs to the F-actin-capping protein alpha subunit family. In terms of assembly, heterodimer of an alpha and a beta subunit.

Its function is as follows. F-actin-capping proteins bind in a Ca(2+)-independent manner to the fast growing ends of actin filaments (barbed end) thereby blocking the exchange of subunits at these ends. Unlike other capping proteins (such as gelsolin and severin), these proteins do not sever actin filaments. The sequence is that of F-actin-capping protein subunit alpha (CAP1) from Kluyveromyces lactis (strain ATCC 8585 / CBS 2359 / DSM 70799 / NBRC 1267 / NRRL Y-1140 / WM37) (Yeast).